The following is a 218-amino-acid chain: MIEEKLKKQAAWAAIKYIKPGDIVGVGSGSTAEYFIDALGSIKNLIKGTVSSSRISSSKLKDLNIPLFDLNEVSLLNIYVDGADEINQKKHMIKGKGAALTREKIIASAAKKFICIVDSSKFVHVLGRAPLPIEVIPMARTLVSKKIIDIGGSPKYRKGIITENGNVLLDVHNLIILDSLFLEEKINNIPGVVSVGLFAHRAADIAIISGKNGIKIID.

Substrate contacts are provided by residues 28-31, 81-84, and 94-97; these read SGST, DGAD, and KGKG. The Proton acceptor role is filled by Glu103. Residue Lys121 participates in substrate binding.

The protein belongs to the ribose 5-phosphate isomerase family. In terms of assembly, homodimer.

The catalysed reaction is aldehydo-D-ribose 5-phosphate = D-ribulose 5-phosphate. It functions in the pathway carbohydrate degradation; pentose phosphate pathway; D-ribose 5-phosphate from D-ribulose 5-phosphate (non-oxidative stage): step 1/1. Catalyzes the reversible conversion of ribose-5-phosphate to ribulose 5-phosphate. The chain is Ribose-5-phosphate isomerase A from Wigglesworthia glossinidia brevipalpis.